The following is a 478-amino-acid chain: PRAME family member 26 (478 aa).

One copy of the LRR 1; degenerate repeat lies at 99–126 (RWKLQVLDLQDVCENFWMVWSEAMARGC). One copy of the LRR 2; degenerate repeat lies at 181-205 (HLCCKKLKILGMPFRNIRSILKMVN). The stretch at 206–232 (LDCIQEVEVNCKWVLPILTQFTPYLGH) is one LRR 3; degenerate repeat. Residues 233–268 (MRNLQKLVLSHMDVSRYVSPEQKKEIVTQFTTQFLK) form an LRR 4; degenerate repeat. LRR repeat units follow at residues 269–294 (LHCL…LSCL), 295–326 (KTSL…SQLK), 327–347 (TLDL…QILL), 351–378 (AATL…ALSR), and 379–403 (CFEL…LLSH).

This sequence belongs to the PRAME family.

In Homo sapiens (Human), this protein is PRAME family member 26.